A 61-amino-acid chain; its full sequence is Large ribosomal subunit protein uL30 (61 aa).

It belongs to the universal ribosomal protein uL30 family. Part of the 50S ribosomal subunit.

The protein is Large ribosomal subunit protein uL30 of Frankia alni (strain DSM 45986 / CECT 9034 / ACN14a).